Reading from the N-terminus, the 295-residue chain is Protease HtpX (295 aa).

2 consecutive transmembrane segments (helical) span residues 4–24 and 42–62; these read ILLFLATNLAVVLIASITLSL and QLLIFCAVFGFAGSLFSLFIS. H147 contributes to the Zn(2+) binding site. Residue E148 is part of the active site. A Zn(2+)-binding site is contributed by H151. 2 helical membrane-spanning segments follow: residues 158–178 and 199–219; these read VTLALIQGVVNTFVMFFARII and VATIFAELVLGILASAIVMWF. E224 lines the Zn(2+) pocket.

This sequence belongs to the peptidase M48B family. Zn(2+) is required as a cofactor.

It localises to the cell inner membrane. In Pseudomonas fluorescens (strain ATCC BAA-477 / NRRL B-23932 / Pf-5), this protein is Protease HtpX.